Here is a 119-residue protein sequence, read N- to C-terminus: MADPANDRSEREEGGEDDETPPASDGNPSPSANSFTLSNAQTRAREAAQDLLEHQFEGMIKAESNDEGWRTVVEVVERNAVPDTQDIIGRYEITLDGTGDVTGYELLERYRRGDMKEEL.

The segment covering 1–12 has biased composition (basic and acidic residues); that stretch reads MADPANDRSERE. Residues 1–48 form a disordered region; sequence MADPANDRSEREEGGEDDETPPASDGNPSPSANSFTLSNAQTRAREAA. The segment covering 26-42 has biased composition (polar residues); that stretch reads GNPSPSANSFTLSNAQT.

The protein belongs to the gas vesicle GvpO family. In terms of assembly, forms homodimers, forms a GvpN1-GvpO1 heterodimer, interacts with GvpC1 (via the latter's C-terminus), GvpF1, GvpI1 and GvpL1, might interact with GvpA1.

The protein resides in the gas vesicle. It is found in the cytoplasm. Its function is as follows. A minor component of the gas vesicle, also found in soluble extracts. May play a role in transcription and/or RNA stability and in GV assembly. Gas vesicles are hollow, gas filled proteinaceous nanostructures found in several microbial planktonic microorganisms. They allow positioning of halobacteria at the optimal depth for growth in the poorly aerated, shallow brine pools of their habitat. Functionally, expression of a 9.5 kb p-vac DNA fragment containing 2 divergently transcribed regions (gvpD-gvpE-gvpF-gvpG-gvpH-gvpI-gvpJ-gvpK-gvpL-gvpM and gvpA-gvpC-gvpN-gvpO) allows H.volcanii to produce gas vesicles. A minimal gas vesicle can be made in H.volcanii by gvpA1-gvpO1 gvpF1-gvpG1-gvpJ1-gvpK1-gvpL1-gvpM1; lack of enough GvpJ1 prevents formation. The same region restores gas vesicle production in H.halobium without the p-vac locus, but it still has the c-vac locus. The sequence is that of Gas vesicle protein O1 from Halobacterium salinarum (strain ATCC 700922 / JCM 11081 / NRC-1) (Halobacterium halobium).